The sequence spans 64 residues: Protein YnhH (64 aa).

The protein is Protein YnhH of Escherichia coli (strain K12).